Consider the following 186-residue polypeptide: NADH-quinone oxidoreductase subunit B (186 aa).

4 residues coordinate [4Fe-4S] cluster: C44, C45, C110, and C139.

This sequence belongs to the complex I 20 kDa subunit family. As to quaternary structure, NDH-1 is composed of 14 different subunits. Subunits NuoB, C, D, E, F, and G constitute the peripheral sector of the complex. Requires [4Fe-4S] cluster as cofactor.

The protein localises to the cell inner membrane. It carries out the reaction a quinone + NADH + 5 H(+)(in) = a quinol + NAD(+) + 4 H(+)(out). NDH-1 shuttles electrons from NADH, via FMN and iron-sulfur (Fe-S) centers, to quinones in the respiratory chain. The immediate electron acceptor for the enzyme in this species is believed to be ubiquinone. Couples the redox reaction to proton translocation (for every two electrons transferred, four hydrogen ions are translocated across the cytoplasmic membrane), and thus conserves the redox energy in a proton gradient. This Leptospira biflexa serovar Patoc (strain Patoc 1 / Ames) protein is NADH-quinone oxidoreductase subunit B.